Here is a 513-residue protein sequence, read N- to C-terminus: Light-independent protochlorophyllide reductase subunit B (513 aa).

D36 contributes to the [4Fe-4S] cluster binding site. The active-site Proton donor is the D299. 434–435 (GM) provides a ligand contact to substrate.

This sequence belongs to the ChlB/BchB/BchZ family. Protochlorophyllide reductase is composed of three subunits; ChlL, ChlN and ChlB. Forms a heterotetramer of two ChlB and two ChlN subunits. It depends on [4Fe-4S] cluster as a cofactor.

The protein resides in the plastid. The protein localises to the chloroplast. The catalysed reaction is chlorophyllide a + oxidized 2[4Fe-4S]-[ferredoxin] + 2 ADP + 2 phosphate = protochlorophyllide a + reduced 2[4Fe-4S]-[ferredoxin] + 2 ATP + 2 H2O. It functions in the pathway porphyrin-containing compound metabolism; chlorophyll biosynthesis (light-independent). Its function is as follows. Component of the dark-operative protochlorophyllide reductase (DPOR) that uses Mg-ATP and reduced ferredoxin to reduce ring D of protochlorophyllide (Pchlide) to form chlorophyllide a (Chlide). This reaction is light-independent. The NB-protein (ChlN-ChlB) is the catalytic component of the complex. The chain is Light-independent protochlorophyllide reductase subunit B from Cycas taitungensis (Prince sago).